Consider the following 105-residue polypeptide: Small ribosomal subunit protein uS10 (105 aa).

It belongs to the universal ribosomal protein uS10 family. Part of the 30S ribosomal subunit.

Involved in the binding of tRNA to the ribosomes. This Cyanothece sp. (strain PCC 7425 / ATCC 29141) protein is Small ribosomal subunit protein uS10.